A 243-amino-acid polypeptide reads, in one-letter code: tRNA1(Val) (adenine(37)-N6)-methyltransferase (243 aa).

Belongs to the methyltransferase superfamily. tRNA (adenine-N(6)-)-methyltransferase family.

The protein resides in the cytoplasm. The catalysed reaction is adenosine(37) in tRNA1(Val) + S-adenosyl-L-methionine = N(6)-methyladenosine(37) in tRNA1(Val) + S-adenosyl-L-homocysteine + H(+). Functionally, specifically methylates the adenine in position 37 of tRNA(1)(Val) (anticodon cmo5UAC). The sequence is that of tRNA1(Val) (adenine(37)-N6)-methyltransferase from Shewanella loihica (strain ATCC BAA-1088 / PV-4).